We begin with the raw amino-acid sequence, 172 residues long: 3-phenylpropionate/cinnamic acid dioxygenase subunit beta (172 aa).

Belongs to the bacterial ring-hydroxylating dioxygenase beta subunit family. In terms of assembly, this dioxygenase system consists of four proteins: the two subunits of the hydroxylase component (HcaE and HcaF), a ferredoxin (HcaC) and a ferredoxin reductase (HcaD).

The enzyme catalyses 3-phenylpropanoate + NADH + O2 + H(+) = 3-(cis-5,6-dihydroxycyclohexa-1,3-dien-1-yl)propanoate + NAD(+). It catalyses the reaction (E)-cinnamate + NADH + O2 + H(+) = (2E)-3-(cis-5,6-dihydroxycyclohexa-1,3-dien-1-yl)prop-2-enoate + NAD(+). The protein operates within aromatic compound metabolism; 3-phenylpropanoate degradation. Its function is as follows. Part of the multicomponent 3-phenylpropionate dioxygenase. Converts 3-phenylpropionic acid (PP) and cinnamic acid (CI) into 3-phenylpropionate-dihydrodiol (PP-dihydrodiol) and cinnamic acid-dihydrodiol (CI-dihydrodiol), respectively. This is 3-phenylpropionate/cinnamic acid dioxygenase subunit beta from Shigella sonnei (strain Ss046).